The primary structure comprises 541 residues: Imidazole glycerol phosphate synthase hisHF (541 aa).

The Glutamine amidotransferase type-1 domain occupies 2–214 (IVSIVDYGSG…LTGNYEQPIS (213 aa)). Catalysis depends on for GATase activity residues cysteine 80, histidine 189, and glutamate 191. The tract at residues 228-541 (LTKRIIACLD…LAIHDVLVRT (314 aa)) is cyclase. Active-site residues include aspartate 237 and aspartate 396.

In the C-terminal section; belongs to the HisA/HisF family.

It catalyses the reaction 5-[(5-phospho-1-deoxy-D-ribulos-1-ylimino)methylamino]-1-(5-phospho-beta-D-ribosyl)imidazole-4-carboxamide + L-glutamine = D-erythro-1-(imidazol-4-yl)glycerol 3-phosphate + 5-amino-1-(5-phospho-beta-D-ribosyl)imidazole-4-carboxamide + L-glutamate + H(+). It carries out the reaction L-glutamine + H2O = L-glutamate + NH4(+). Its pathway is amino-acid biosynthesis; L-histidine biosynthesis; L-histidine from 5-phospho-alpha-D-ribose 1-diphosphate: step 5/9. In terms of biological role, IGPS catalyzes the conversion of PRFAR and glutamine to IGP, AICAR and glutamate. The glutaminase domain produces the ammonia necessary for the cyclase domain to produce IGP and AICAR from PRFAR. The ammonia is channeled to the active site of the cyclase domain. The protein is Imidazole glycerol phosphate synthase hisHF (his4) of Schizosaccharomyces pombe (strain 972 / ATCC 24843) (Fission yeast).